We begin with the raw amino-acid sequence, 243 residues long: MLLYLIYGPTCSGKTDIAIQIAQKTGWPVVALDRVQCCPQIATGSGRPLPSELQSTRRIYLDSRRLTKGIIDAEGAHRRLILEVDWQESEEGLILEGGSVSLLNCMAKSPYWKSGFQWHVKRLRLGDSDAFLARAKQRVTEMFAIREDRPSLLEELAELWNYPATRPILEDIDGYRCAIRFARKHDLAINQLPDIDAERQQDLIEAIAKEYLEHAIMQERDFPQWPEDGARQPVGPATLMRIQ.

The protein belongs to the isopentenyl transferase family.

It catalyses the reaction dimethylallyl diphosphate + AMP = N(6)-(dimethylallyl)adenosine 5'-phosphate + diphosphate. Functionally, transfers dimethylallyl groups to AMP as part of the biosynthesis of cytokinin phytohormones. In Rhizobium rhizogenes (Agrobacterium rhizogenes), this protein is Adenylate dimethylallyltransferase (tzs).